A 234-amino-acid chain; its full sequence is CHD1 helical C-terminal domain containing protein 1 (234 aa).

The interval 1–38 (MEASDGQADEREEPLEQGTNARSLERRSSTTPAKDSLV) is disordered. The CHD1 helical C-terminal domain (CHCT) stretch occupies residues 44–145 (LDRDTFKICK…NNQTTKFLMA (102 aa)). Residues 200 to 234 (LRARGPRRRGSKLPQEPKLKRRRIKEAPDTPETCL) are disordered.

The protein localises to the cytoplasm. The protein resides in the nucleus. Functionally, may play a role in regulation of apoptosis. In Bos taurus (Bovine), this protein is CHD1 helical C-terminal domain containing protein 1 (CHCT1).